Reading from the N-terminus, the 125-residue chain is Histone H2A (125 aa).

Residues 1 to 18 (MSGRGKGGKVKGKSKTRS) show a composition bias toward basic residues. The segment at 1-23 (MSGRGKGGKVKGKSKTRSSRAGL) is disordered. The residue at position 2 (serine 2) is an N-acetylserine. An N5-methylglutamine modification is found at glutamine 104.

It belongs to the histone H2A family. The nucleosome is a histone octamer containing two molecules each of H2A, H2B, H3 and H4 assembled in one H3-H4 heterotetramer and two H2A-H2B heterodimers. The octamer wraps approximately 147 bp of DNA.

It localises to the nucleus. It is found in the chromosome. In terms of biological role, core component of nucleosome. Nucleosomes wrap and compact DNA into chromatin, limiting DNA accessibility to the cellular machineries which require DNA as a template. Histones thereby play a central role in transcription regulation, DNA repair, DNA replication and chromosomal stability. DNA accessibility is regulated via a complex set of post-translational modifications of histones, also called histone code, and nucleosome remodeling. This chain is Histone H2A, found in Sepia officinalis (Common cuttlefish).